The chain runs to 84 residues: Perlustrin (84 aa).

The IGFBP N-terminal domain maps to 1–82; the sequence is LSCASCENAA…LDFKGVCARV (82 aa). 6 disulfides stabilise this stretch: Cys-3/Cys-28, Cys-6/Cys-30, Cys-11/Cys-31, Cys-18/Cys-34, Cys-42/Cys-55, and Cys-49/Cys-79.

As to expression, shell.

Binds human IGF1 and IGF2 and bovine insulin. This is Perlustrin from Haliotis laevigata (Smooth Australian abalone).